A 233-amino-acid polypeptide reads, in one-letter code: Probable dihydroorotate dehydrogenase B (NAD(+)), electron transfer subunit (233 aa).

Positions 1–87 (MYRVVTIEEV…RGPYGHGFIK (87 aa)) constitute an FAD-binding FR-type domain. [2Fe-2S] cluster is bound by residues Cys-202, Cys-207, Cys-210, and Cys-218.

It belongs to the PyrK family. In terms of assembly, heterotetramer of 2 PyrK and 2 PyrD type B subunits. [2Fe-2S] cluster is required as a cofactor. It depends on FAD as a cofactor.

Its pathway is pyrimidine metabolism; UMP biosynthesis via de novo pathway; orotate from (S)-dihydroorotate (NAD(+) route): step 1/1. Functionally, responsible for channeling the electrons from the oxidation of dihydroorotate from the FMN redox center in the PyrD type B subunit to the ultimate electron acceptor NAD(+). The polypeptide is Probable dihydroorotate dehydrogenase B (NAD(+)), electron transfer subunit (Thermococcus kodakarensis (strain ATCC BAA-918 / JCM 12380 / KOD1) (Pyrococcus kodakaraensis (strain KOD1))).